The chain runs to 435 residues: Xylose isomerase (435 aa).

Catalysis depends on residues histidine 100 and aspartate 103. Residues glutamate 231, glutamate 267, histidine 270, aspartate 295, aspartate 306, aspartate 308, and aspartate 338 each coordinate Mg(2+).

It belongs to the xylose isomerase family. In terms of assembly, homotetramer. Mg(2+) serves as cofactor.

It is found in the cytoplasm. It carries out the reaction alpha-D-xylose = alpha-D-xylulofuranose. The chain is Xylose isomerase from Brucella canis (strain ATCC 23365 / NCTC 10854 / RM-666).